Reading from the N-terminus, the 98-residue chain is Large ribosomal subunit protein eL14 (98 aa).

Belongs to the eukaryotic ribosomal protein eL14 family.

The protein is Large ribosomal subunit protein eL14 of Thermofilum pendens (strain DSM 2475 / Hrk 5).